Reading from the N-terminus, the 548-residue chain is Membrane protein insertase YidC (548 aa).

Residues 6-26 traverse the membrane as a helical segment; sequence NLFLIAFLFVSFMIWQAWQTD. The segment at 30–53 is disordered; the sequence is QPLQTQTTQNTTSAAGDAVNQGVP. The next 4 helical transmembrane spans lie at 345-365, 420-440, 458-478, and 499-519; these read KFLHGFIGNWGFSIIVITFIV, LGGCLPLVIQMPIFLALYYML, LAAQDPYYILPILMGVTMFFI, and PVIFTVFFLWFPSGLVLYYIV.

Belongs to the OXA1/ALB3/YidC family. Type 1 subfamily. As to quaternary structure, interacts with the Sec translocase complex via SecD. Specifically interacts with transmembrane segments of nascent integral membrane proteins during membrane integration.

The protein localises to the cell inner membrane. Its function is as follows. Required for the insertion and/or proper folding and/or complex formation of integral membrane proteins into the membrane. Involved in integration of membrane proteins that insert both dependently and independently of the Sec translocase complex, as well as at least some lipoproteins. Aids folding of multispanning membrane proteins. This chain is Membrane protein insertase YidC, found in Erwinia tasmaniensis (strain DSM 17950 / CFBP 7177 / CIP 109463 / NCPPB 4357 / Et1/99).